The following is a 140-amino-acid chain: Holo-[acyl-carrier-protein] synthase (140 aa).

Asp8 and Glu62 together coordinate Mg(2+).

Belongs to the P-Pant transferase superfamily. AcpS family. It depends on Mg(2+) as a cofactor.

The protein localises to the cytoplasm. It carries out the reaction apo-[ACP] + CoA = holo-[ACP] + adenosine 3',5'-bisphosphate + H(+). Its function is as follows. Transfers the 4'-phosphopantetheine moiety from coenzyme A to a Ser of acyl-carrier-protein. The sequence is that of Holo-[acyl-carrier-protein] synthase from Cupriavidus pinatubonensis (strain JMP 134 / LMG 1197) (Cupriavidus necator (strain JMP 134)).